The chain runs to 286 residues: Translocon-associated protein subunit alpha (286 aa).

An N-terminal signal peptide occupies residues 1 to 23 (MRVLPRLLLLLLLAFPAAVLLRG). The Lumenal segment spans residues 24–207 (GPGGSLVAAQ…EREDGLDGET (184 aa)). Acidic residues predominate over residues 37–75 (EDEETVEDSIIEDEDDEAEVEEDEPTDLAEDKEEEDVSG). Positions 37–83 (EDEETVEDSIIEDEDDEAEVEEDEPTDLAEDKEEEDVSGEPEASPSA) are disordered. 2 N-linked (GlcNAc...) asparagine glycosylation sites follow: Asn-136 and Asn-191. Residues 208-228 (IFMYMFLAGLGLLVVVGLHQL) form a helical membrane-spanning segment. At 229-286 (LESRKRKRPIQKVEMGTSSQNDVDMSWIPQETLNQINKASPRRLPRKRAQKRSVGSDE) the chain is on the cytoplasmic side. Ser-247 carries the phosphoserine modification. A Phosphothreonine modification is found at Thr-260. The disordered stretch occupies residues 261–286 (LNQINKASPRRLPRKRAQKRSVGSDE). Phosphoserine is present on Ser-268. Positions 268-279 (SPRRLPRKRAQK) are enriched in basic residues.

This sequence belongs to the TRAP-alpha family. In terms of assembly, heterotetramer of TRAP-alpha, TRAP-beta, TRAP-delta and TRAP-gamma. Interacts with palmitoylated calnexin (CALX), the interaction is required for efficient folding of glycosylated proteins. In terms of processing, phosphorylated in its cytoplasmic tail.

It is found in the endoplasmic reticulum membrane. Its function is as follows. TRAP proteins are part of a complex whose function is to bind calcium to the ER membrane and thereby regulate the retention of ER resident proteins. May be involved in the recycling of the translocation apparatus after completion of the translocation process or may function as a membrane-bound chaperone facilitating folding of translocated proteins. The sequence is that of Translocon-associated protein subunit alpha (SSR1) from Canis lupus familiaris (Dog).